The primary structure comprises 432 residues: Adenylosuccinate synthetase (432 aa).

GTP contacts are provided by residues 12-18 (GDEGKGK) and 40-42 (GHT). The active-site Proton acceptor is the Asp13. The Mg(2+) site is built by Asp13 and Gly40. IMP-binding positions include 13–16 (DEGK), 38–41 (NAGH), Thr129, Arg143, Gln224, Thr239, and Arg303. Residue His41 is the Proton donor of the active site. Residue 299–305 (VTTGRRR) participates in substrate binding. Residues Arg305, 331–333 (KLD), and 413–415 (GVG) each bind GTP.

It belongs to the adenylosuccinate synthetase family. Homodimer. Requires Mg(2+) as cofactor.

The protein localises to the cytoplasm. The catalysed reaction is IMP + L-aspartate + GTP = N(6)-(1,2-dicarboxyethyl)-AMP + GDP + phosphate + 2 H(+). It functions in the pathway purine metabolism; AMP biosynthesis via de novo pathway; AMP from IMP: step 1/2. Functionally, plays an important role in the de novo pathway of purine nucleotide biosynthesis. Catalyzes the first committed step in the biosynthesis of AMP from IMP. This chain is Adenylosuccinate synthetase, found in Mycobacterium marinum (strain ATCC BAA-535 / M).